We begin with the raw amino-acid sequence, 242 residues long: ATP synthase subunit a (242 aa).

Helical transmembrane passes span 28 to 48, 89 to 109, 128 to 148, 193 to 213, and 214 to 234; these read LHGQVFLSSWVVIGLLLLLVV, LPFVGTLFLFIFVCNWGGALI, INTTVAMALLVSLSYFYAGLS, LVVAVLAFLVPVLVPLPAMFL, and GLFTSAIQALIFATLAANYIG.

The protein belongs to the ATPase A chain family. In terms of assembly, F-type ATPases have 2 components, CF(1) - the catalytic core - and CF(0) - the membrane proton channel. CF(1) has five subunits: alpha(3), beta(3), gamma(1), delta(1), epsilon(1). CF(0) has four main subunits: a, b, b' and c.

The protein localises to the cellular thylakoid membrane. Key component of the proton channel; it plays a direct role in the translocation of protons across the membrane. This chain is ATP synthase subunit a, found in Synechococcus sp. (strain WH7803).